Here is a 62-residue protein sequence, read N- to C-terminus: MTIAFQLAVFALIATSLILLISVPVVFASSDGWSSNKNIVFSGTSLWIGLVFLVAILNSLIS.

Helical transmembrane passes span 8–28 (AVFALIATSLILLISVPVVFA) and 41–61 (FSGTSLWIGLVFLVAILNSLI).

The protein belongs to the PsbZ family. As to quaternary structure, PSII is composed of 1 copy each of membrane proteins PsbA, PsbB, PsbC, PsbD, PsbE, PsbF, PsbH, PsbI, PsbJ, PsbK, PsbL, PsbM, PsbT, PsbY, PsbZ, Psb30/Ycf12, at least 3 peripheral proteins of the oxygen-evolving complex and a large number of cofactors. It forms dimeric complexes.

It localises to the plastid. It is found in the chloroplast thylakoid membrane. Its function is as follows. May control the interaction of photosystem II (PSII) cores with the light-harvesting antenna, regulates electron flow through the 2 photosystem reaction centers. PSII is a light-driven water plastoquinone oxidoreductase, using light energy to abstract electrons from H(2)O, generating a proton gradient subsequently used for ATP formation. This chain is Photosystem II reaction center protein Z, found in Phalaenopsis aphrodite subsp. formosana (Moth orchid).